Consider the following 172-residue polypeptide: Nicotinamide-nucleotide adenylyltransferase (172 aa).

It belongs to the archaeal NMN adenylyltransferase family.

It is found in the cytoplasm. It carries out the reaction beta-nicotinamide D-ribonucleotide + ATP + H(+) = diphosphate + NAD(+). The protein operates within cofactor biosynthesis; NAD(+) biosynthesis; NAD(+) from nicotinamide D-ribonucleotide: step 1/1. This chain is Nicotinamide-nucleotide adenylyltransferase, found in Methanococcus aeolicus (strain ATCC BAA-1280 / DSM 17508 / OCM 812 / Nankai-3).